The sequence spans 1159 residues: WASH complex subunit 5 (1159 aa).

The protein belongs to the strumpellin family. As to quaternary structure, component of the WASH complex.

The protein resides in the early endosome. Acts at least in part as component of the WASH complex which seems to regulate washc1 nucleation-promoting factor (NPF) activity and is required for its membrane targeting during endosomal sorting. The polypeptide is WASH complex subunit 5 (Xenopus tropicalis (Western clawed frog)).